Reading from the N-terminus, the 425-residue chain is UDP-N-acetylglucosamine 1-carboxyvinyltransferase (425 aa).

22 to 23 contributes to the phosphoenolpyruvate binding site; the sequence is KN. UDP-N-acetyl-alpha-D-glucosamine is bound at residue R98. The Proton donor role is filled by C122. Residue C122 is modified to 2-(S-cysteinyl)pyruvic acid O-phosphothioketal. Residues 127 to 131, D313, and I335 contribute to the UDP-N-acetyl-alpha-D-glucosamine site; that span reads RPVDQ.

Belongs to the EPSP synthase family. MurA subfamily.

The protein localises to the cytoplasm. It carries out the reaction phosphoenolpyruvate + UDP-N-acetyl-alpha-D-glucosamine = UDP-N-acetyl-3-O-(1-carboxyvinyl)-alpha-D-glucosamine + phosphate. It participates in cell wall biogenesis; peptidoglycan biosynthesis. Functionally, cell wall formation. Adds enolpyruvyl to UDP-N-acetylglucosamine. The polypeptide is UDP-N-acetylglucosamine 1-carboxyvinyltransferase (Xylella fastidiosa (strain M23)).